A 103-amino-acid chain; its full sequence is Large ribosomal subunit protein bL21 (103 aa).

It belongs to the bacterial ribosomal protein bL21 family. In terms of assembly, part of the 50S ribosomal subunit. Contacts protein L20.

This protein binds to 23S rRNA in the presence of protein L20. This is Large ribosomal subunit protein bL21 from Hahella chejuensis (strain KCTC 2396).